The following is a 591-amino-acid chain: L-fucose isomerase (591 aa).

Catalysis depends on proton acceptor residues glutamate 337 and aspartate 361. Glutamate 337, aspartate 361, and histidine 528 together coordinate Mn(2+).

The protein belongs to the L-fucose isomerase family. Homohexamer. Mn(2+) is required as a cofactor.

It localises to the cytoplasm. It catalyses the reaction L-fucose = L-fuculose. It functions in the pathway carbohydrate degradation; L-fucose degradation; L-lactaldehyde and glycerone phosphate from L-fucose: step 1/3. Its function is as follows. Converts the aldose L-fucose into the corresponding ketose L-fuculose. The chain is L-fucose isomerase from Salmonella choleraesuis (strain SC-B67).